A 687-amino-acid chain; its full sequence is Histone deacetylase clr3 (687 aa).

Residues 55–385 (KKSGLCYDPR…ALAVAQSLLG (331 aa)) are histone deacetylase. Residue His-195 is part of the active site.

The protein belongs to the histone deacetylase family. HD type 2 subfamily. In terms of assembly, interacts with ccq1, clr1, clr2 and mit1.

The protein localises to the nucleus. It is found in the chromosome. The protein resides in the centromere. Its subcellular location is the telomere. It catalyses the reaction N(6)-acetyl-L-lysyl-[histone] + H2O = L-lysyl-[histone] + acetate. In terms of biological role, responsible for the deacetylation of lysine residues on the N-terminal part of the core histones (H2A, H2B, H3 and H4). Histone deacetylation gives a tag for epigenetic repression and plays an important role in transcriptional regulation, cell cycle progression and developmental events. Histone deacetylases act via the formation of large multiprotein complexes. Required for proper positioning of nucleosomes at heterochromatic loci and for transcriptional gene silencing (TGS) function of the Snf2/Hdac-containing repressor complex (SHREC). This is Histone deacetylase clr3 (clr3) from Schizosaccharomyces pombe (strain 972 / ATCC 24843) (Fission yeast).